The sequence spans 366 residues: Galactoside alpha-(1,2)-fucosyltransferase 1 (366 aa).

Over 1-8 (MWPPSHRQ) the chain is Cytoplasmic. Residues 9–25 (LCLAFLLVCVLSVISFF) form a helical; Signal-anchor for type II membrane protein membrane-spanning segment. The Lumenal segment spans residues 26 to 366 (LHIHQDSFPH…LSSLWTLAKP (341 aa)). N-linked (GlcNAc...) asparagine glycans are attached at residues Asn-66, Asn-302, and Asn-328.

The protein belongs to the glycosyltransferase 11 family.

Its subcellular location is the golgi apparatus. The protein resides in the golgi stack membrane. It carries out the reaction a beta-D-galactosyl-(1-&gt;4)-N-acetyl-beta-D-glucosaminyl derivative + GDP-beta-L-fucose = an alpha-L-Fuc-(1-&gt;2)-beta-D-Gal-(1-&gt;4)-beta-D-GlcNAc derivative + GDP + H(+). The enzyme catalyses a ganglioside GA1 + GDP-beta-L-fucose = a ganglioside Fuc-GA1 + GDP + H(+). It catalyses the reaction a beta-D-Gal-(1-&gt;3)-beta-D-GlcNAc-(1-&gt;3)-beta-D-Gal-(1-&gt;4)-beta-D-Glc-(1&lt;-&gt;1')-Cer(d18:1(4E)) + GDP-beta-L-fucose = alpha-L-fucosyl-(1-&gt;2)- beta-D-galactosyl-(1-&gt;3)-N-acetyl-beta-D-glucosaminyl-(1-&gt;3)-beta-D-galactosyl-(1-&gt;4)-beta-D-glucosyl-(1&lt;-&gt;1')-N-acylsphing-4-enine + GDP + H(+). The catalysed reaction is a neolactoside nLc4Cer(d18:1(4E)) + GDP-beta-L-fucose = a neolactoside IV(2)-alpha-Fuc-nLc4Cer(d18:1(4E)) + GDP + H(+). It carries out the reaction a ganglioside GM1 + GDP-beta-L-fucose = a ganglioside Fuc-GM1 + GDP + H(+). The enzyme catalyses beta-D-galactosyl-(1-&gt;3)-N-acetyl-D-galactosamine + GDP-beta-L-fucose = alpha-L-fucosyl-(1-&gt;2)-beta-D-galactosyl-(1-&gt;3)-N-acetyl-D-galactosamine + GDP + H(+). It participates in protein modification; protein glycosylation. In terms of biological role, catalyzes the transfer of L-fucose, from a guanosine diphosphate-beta-L-fucose, to the terminal galactose residue of glycoconjugates through an alpha(1,2) linkage leading to H antigen synthesis that is an intermediate substrate in the synthesis of ABO blood group antigens. H antigen is essential for maturation of the glomerular layer of the main olfactory bulb, in cell migration and early cell-cell contacts during tumor associated angiogenesis. Preferentially fucosylates soluble lactose and to a lesser extent fucosylates glycolipids gangliosides GA1 and GM1a. The chain is Galactoside alpha-(1,2)-fucosyltransferase 1 from Pan troglodytes (Chimpanzee).